The chain runs to 478 residues: Alpha,alpha-trehalose-phosphate synthase [UDP-forming] (478 aa).

Residues Y89 and D143 each contribute to the D-glucose 6-phosphate site. Residues R280 and K285 each contribute to the UDP site. UDP-alpha-D-glucose contacts are provided by R280 and K285. R318 serves as a coordination point for D-glucose 6-phosphate. Residues I357 and 383–387 each bind UDP; that span reads LVSYE. Residues I357 and 379–387 each bind UDP-alpha-D-glucose; that span reads DGMNLVSYE.

Belongs to the glycosyltransferase 20 family.

The enzyme catalyses D-glucose 6-phosphate + UDP-alpha-D-glucose = alpha,alpha-trehalose 6-phosphate + UDP + H(+). It functions in the pathway carbohydrate biosynthesis. Inhibited by validoxylamine A, a non-reactive trehalose analog. Functionally, synthase catalytic subunit of the trehalose synthase complex that catalyzes the production of trehalose from glucose-6-phosphate and UDP-alpha-D-glucose in a two step process. The protein is Alpha,alpha-trehalose-phosphate synthase [UDP-forming] of Candida albicans (strain SC5314 / ATCC MYA-2876) (Yeast).